The following is a 632-amino-acid chain: Phosphatidylinositol 3,4,5-trisphosphate 3-phosphatase and protein-tyrosine-phosphatase PTEN2B (632 aa).

Over residues 1-12 (METDPANSSSKS) the composition is skewed to polar residues. A disordered region spans residues 1–98 (METDPANSSS…RESPPSIFSS (98 aa)). A compositionally biased stretch (basic and acidic residues) spans 39–48 (SAEREAHEDS). A compositionally biased stretch (polar residues) spans 63 to 73 (MPASSTGSEPL). A compositionally biased stretch (low complexity) spans 87 to 98 (SPRESPPSIFSS). Positions 189-368 (RRYQEGEFDL…KYYERVQNQF (180 aa)) constitute a Phosphatase tensin-type domain. C307 functions as the Phosphocysteine intermediate in the catalytic mechanism. In terms of domain architecture, C2 tensin-type spans 375–502 (ERRCMLRGFR…FHVEIVMIEP (128 aa)). Residues 504–603 (NSQPTKSKSD…SGHYNPIPNN (100 aa)) form a disordered region. Positions 505-527 (SQPTKSKSDSTQQQSQSSSSADS) are enriched in low complexity. Acidic residues predominate over residues 535-549 (KDDDVFSDSDGEEEG). Position 541 is a phosphoserine (S541). The span at 550–571 (NSQSYSTNEKTASSMHTTSKPH) shows a compositional bias: polar residues. The span at 584-594 (ANRSVTSSSSS) shows a compositional bias: low complexity.

Belongs to the PTEN phosphatase protein family. Expressed, at low levels, in seedlings, roots, stems, leaves, flowers and siliques. However, at protein level, not observed in older leaves, flowers and siliques.

The catalysed reaction is O-phospho-L-tyrosyl-[protein] + H2O = L-tyrosyl-[protein] + phosphate. It catalyses the reaction a 1,2-diacyl-sn-glycero-3-phospho-(1D-myo-inositol-3,4,5-trisphosphate) + H2O = a 1,2-diacyl-sn-glycero-3-phospho-(1D-myo-inositol-4,5-bisphosphate) + phosphate. Protein tyrosine phosphatase that also exhibits a weak lipid phosphatase activity towards PtdIns(3)P. The polypeptide is Phosphatidylinositol 3,4,5-trisphosphate 3-phosphatase and protein-tyrosine-phosphatase PTEN2B (Arabidopsis thaliana (Mouse-ear cress)).